The following is a 197-amino-acid chain: Probable molybdenum cofactor guanylyltransferase (197 aa).

Residues 6–8 (LAG), Lys-18, Asp-65, and Asp-97 contribute to the GTP site. Asp-97 serves as a coordination point for Mg(2+).

Belongs to the MobA family. The cofactor is Mg(2+).

Its subcellular location is the cytoplasm. The enzyme catalyses Mo-molybdopterin + GTP + H(+) = Mo-molybdopterin guanine dinucleotide + diphosphate. Transfers a GMP moiety from GTP to Mo-molybdopterin (Mo-MPT) cofactor (Moco or molybdenum cofactor) to form Mo-molybdopterin guanine dinucleotide (Mo-MGD) cofactor. This Staphylococcus carnosus (strain TM300) protein is Probable molybdenum cofactor guanylyltransferase.